We begin with the raw amino-acid sequence, 558 residues long: Urocanate hydratase (558 aa).

NAD(+) is bound by residues 53-54, glutamine 131, 177-179, glutamate 197, arginine 202, 243-244, 264-268, 274-275, and tyrosine 323; these read GG, GMG, NA, QTSAH, and YL. Cysteine 411 is an active-site residue. Glycine 493 provides a ligand contact to NAD(+).

This sequence belongs to the urocanase family. The cofactor is NAD(+).

The protein resides in the cytoplasm. It carries out the reaction 4-imidazolone-5-propanoate = trans-urocanate + H2O. It functions in the pathway amino-acid degradation; L-histidine degradation into L-glutamate; N-formimidoyl-L-glutamate from L-histidine: step 2/3. In terms of biological role, catalyzes the conversion of urocanate to 4-imidazolone-5-propionate. The protein is Urocanate hydratase of Idiomarina loihiensis (strain ATCC BAA-735 / DSM 15497 / L2-TR).